The chain runs to 288 residues: Shikimate dehydrogenase (NADP(+)) (288 aa).

Shikimate is bound by residues 21-23 (SLS) and T68. Residue K72 is the Proton acceptor of the active site. Shikimate contacts are provided by N93 and D108. Residues 132–136 (GNGGA) and L230 each bind NADP(+). Residue Y232 participates in shikimate binding. Position 253 (G253) interacts with NADP(+).

This sequence belongs to the shikimate dehydrogenase family. In terms of assembly, homodimer.

It carries out the reaction shikimate + NADP(+) = 3-dehydroshikimate + NADPH + H(+). It participates in metabolic intermediate biosynthesis; chorismate biosynthesis; chorismate from D-erythrose 4-phosphate and phosphoenolpyruvate: step 4/7. Involved in the biosynthesis of the chorismate, which leads to the biosynthesis of aromatic amino acids. Catalyzes the reversible NADPH linked reduction of 3-dehydroshikimate (DHSA) to yield shikimate (SA). In Crocosphaera subtropica (strain ATCC 51142 / BH68) (Cyanothece sp. (strain ATCC 51142)), this protein is Shikimate dehydrogenase (NADP(+)).